The primary structure comprises 354 residues: Guanine nucleotide-binding protein G(t) subunit alpha-3 (354 aa).

The interval 1-26 is disordered; sequence MGIGISSESKESAKRSKELEKKLQED. Gly2 is lipidated: N-myristoyl glycine. The segment covering 8-26 has biased composition (basic and acidic residues); that stretch reads ESKESAKRSKELEKKLQED. Positions 32 to 354 constitute a G-alpha domain; the sequence is RTVKLLLLGA…KENLKDCGLF (323 aa). The G1 motif stretch occupies residues 35–48; sequence KLLLLGAGESGKST. Residues 40-47, 175-181, 200-204, 269-272, and Ala326 each bind GTP; these read GAGESGKS, LHSRVKT, DVGGQ, and NKKD. Residues Ser47 and Thr181 each coordinate Mg(2+). Residues 173–181 form a G2 motif region; the sequence is DVLHSRVKT. The interval 196-205 is G3 motif; that stretch reads FRMFDVGGQR. Positions 265–272 are G4 motif; the sequence is VLFLNKKD. Residues 324–329 form a G5 motif region; that stretch reads TCATDT.

The protein belongs to the G-alpha family. G(i/o/t/z) subfamily. As to quaternary structure, g proteins are composed of 3 units; alpha, beta and gamma, respectively GNAT3, GNB1 and GNG13 for Gustducin heterotrimer for bitter taste transduction. The alpha chain contains the guanine nucleotide binding site. Component of the TAS2R14-GNAT3 complex, consisting of TAS2R14, GNAT3, GNB1 and GNG2; within the complex interacts with TAS2R14; this complex plays a role in the perception of bitterness. Gustducin heterotrimer may also be composed of GNAT3, GNB3 and GNG13. As to expression, expressed in epithelial cells of taste buds of the circumvallate, foliate and fungiform. Detected in various region of the respiratory track. Expressed also in spermatozoa.

Its subcellular location is the cytoplasm. In terms of biological role, guanine nucleotide-binding protein (G protein) alpha subunit playing a prominent role in bitter and sweet taste transduction as well as in umami (monosodium glutamate, monopotassium glutamate, and inosine monophosphate) taste transduction. This chain is Guanine nucleotide-binding protein G(t) subunit alpha-3 (GNAT3), found in Bos taurus (Bovine).